A 462-amino-acid polypeptide reads, in one-letter code: Na(+)/H(+) antiporter NhaA (462 aa).

A run of 11 helical transmembrane segments spans residues I24–L44, L66–L86, A102–L122, G156–A176, L196–I216, P235–I255, H256–G275, P290–E310, M312–G332, M361–L381, and A392–S412.

The protein belongs to the NhaA Na(+)/H(+) (TC 2.A.33) antiporter family.

It localises to the cell membrane. The catalysed reaction is Na(+)(in) + 2 H(+)(out) = Na(+)(out) + 2 H(+)(in). In terms of biological role, na(+)/H(+) antiporter that extrudes sodium in exchange for external protons. This chain is Na(+)/H(+) antiporter NhaA, found in Bifidobacterium breve (strain NCIMB 8807 / UCC2003).